Consider the following 196-residue polypeptide: ATP-dependent Clp protease proteolytic subunit 1 (196 aa).

S96 acts as the Nucleophile in catalysis. H121 is an active-site residue.

Belongs to the peptidase S14 family. As to quaternary structure, fourteen ClpP subunits assemble into 2 heptameric rings which stack back to back to give a disk-like structure with a central cavity, resembling the structure of eukaryotic proteasomes.

The protein resides in the cytoplasm. The enzyme catalyses Hydrolysis of proteins to small peptides in the presence of ATP and magnesium. alpha-casein is the usual test substrate. In the absence of ATP, only oligopeptides shorter than five residues are hydrolyzed (such as succinyl-Leu-Tyr-|-NHMec, and Leu-Tyr-Leu-|-Tyr-Trp, in which cleavage of the -Tyr-|-Leu- and -Tyr-|-Trp bonds also occurs).. Functionally, cleaves peptides in various proteins in a process that requires ATP hydrolysis. Has a chymotrypsin-like activity. Plays a major role in the degradation of misfolded proteins. The protein is ATP-dependent Clp protease proteolytic subunit 1 of Prochlorococcus marinus (strain SARG / CCMP1375 / SS120).